Reading from the N-terminus, the 233-residue chain is tRNA (guanine-N(7)-)-methyltransferase (233 aa).

Positions 1–36 (MSEFDPNPPRRNFYGRRHGKTLRQSQKGYLSEDLGS) are disordered. The S-adenosyl-L-methionine site is built by glutamate 68, glutamate 93, aspartate 120, and aspartate 142. Aspartate 142 is a catalytic residue. Substrate-binding positions include lysine 146, aspartate 178, and 211 to 214 (TRYE).

Belongs to the class I-like SAM-binding methyltransferase superfamily. TrmB family.

It catalyses the reaction guanosine(46) in tRNA + S-adenosyl-L-methionine = N(7)-methylguanosine(46) in tRNA + S-adenosyl-L-homocysteine. The protein operates within tRNA modification; N(7)-methylguanine-tRNA biosynthesis. Functionally, catalyzes the formation of N(7)-methylguanine at position 46 (m7G46) in tRNA. The sequence is that of tRNA (guanine-N(7)-)-methyltransferase from Paracoccus denitrificans (strain Pd 1222).